We begin with the raw amino-acid sequence, 139 residues long: MARMPRVQAVAAPILRSDPRLEGVTVTTWVPDVDFREFPMINLRRIGGTRNPNAPTLHTLPVVEMTAYTRDGLIETEELYETALEVLYDAVENGTQTPAGYLTSIFETMGATQFSSLYQDSWRIQGLIRLGVRRPRTTL.

The chain is Gene 22 protein (22) from Mycobacterium phage L5 (Mycobacteriophage L5).